The sequence spans 126 residues: uncharacterized protein (126 aa).

This is an uncharacterized protein from Archaeoglobus fulgidus (strain ATCC 49558 / DSM 4304 / JCM 9628 / NBRC 100126 / VC-16).